Consider the following 142-residue polypeptide: Large ribosomal subunit protein uL11 (142 aa).

Belongs to the universal ribosomal protein uL11 family. Part of the ribosomal stalk of the 50S ribosomal subunit. Interacts with L10 and the large rRNA to form the base of the stalk. L10 forms an elongated spine to which L12 dimers bind in a sequential fashion forming a multimeric L10(L12)X complex. One or more lysine residues are methylated.

Forms part of the ribosomal stalk which helps the ribosome interact with GTP-bound translation factors. The sequence is that of Large ribosomal subunit protein uL11 from Pectobacterium carotovorum subsp. carotovorum (strain PC1).